We begin with the raw amino-acid sequence, 507 residues long: Proline--tRNA ligase (507 aa).

The protein belongs to the class-II aminoacyl-tRNA synthetase family. ProS type 3 subfamily. Homodimer.

It localises to the cytoplasm. The catalysed reaction is tRNA(Pro) + L-proline + ATP = L-prolyl-tRNA(Pro) + AMP + diphosphate. Its function is as follows. Catalyzes the attachment of proline to tRNA(Pro) in a two-step reaction: proline is first activated by ATP to form Pro-AMP and then transferred to the acceptor end of tRNA(Pro). This is Proline--tRNA ligase from Protochlamydia amoebophila (strain UWE25).